A 485-amino-acid polypeptide reads, in one-letter code: ATP synthase subunit beta (485 aa).

The segment at 1 to 20 (MSTTKTTKMTVKTGSKGTSG) is disordered. Residue 170–177 (GGAGVGKT) coordinates ATP.

This sequence belongs to the ATPase alpha/beta chains family. In terms of assembly, F-type ATPases have 2 components, CF(1) - the catalytic core - and CF(0) - the membrane proton channel. CF(1) has five subunits: alpha(3), beta(3), gamma(1), delta(1), epsilon(1). CF(0) has three main subunits: a(1), b(2) and c(9-12). The alpha and beta chains form an alternating ring which encloses part of the gamma chain. CF(1) is attached to CF(0) by a central stalk formed by the gamma and epsilon chains, while a peripheral stalk is formed by the delta and b chains.

Its subcellular location is the cell membrane. The catalysed reaction is ATP + H2O + 4 H(+)(in) = ADP + phosphate + 5 H(+)(out). Its function is as follows. Produces ATP from ADP in the presence of a proton gradient across the membrane. The catalytic sites are hosted primarily by the beta subunits. This chain is ATP synthase subunit beta, found in Mycobacterium leprae (strain TN).